The primary structure comprises 167 residues: Transmembrane protein 220 (167 aa).

5 helical membrane passes run 10–30 (PGLW…AAVV), 40–60 (WVVV…NPLV), 69–89 (VSAI…YHFL), 104–122 (ELSG…HSSS), and 130–150 (MHLA…VYVH).

The protein localises to the membrane. The protein is Transmembrane protein 220 (Tmem220) of Mus musculus (Mouse).